The following is an 89-amino-acid chain: Myrmicitoxin(1)-Pr2c (89 aa).

Positions 1–23 (MEIPKLLYIAVIAIGLSGSLTCA) are cleaved as a signal peptide. Residues 24–61 (TPLANPWADPEAEANPKAKATAEATAEAIAEALAEPEP) constitute a propeptide that is removed on maturation. An Asparagine amide modification is found at Asn-88.

This sequence belongs to the formicidae venom clade 1 family. Expressed by the venom gland.

Its subcellular location is the secreted. Vertebrate-selective toxin that causes pain by targeting voltage-gated sodium channels. In Pogonomyrmex rugosus (Desert harvester ant), this protein is Myrmicitoxin(1)-Pr2c.